The primary structure comprises 124 residues: ATP synthase epsilon chain (124 aa).

This sequence belongs to the ATPase epsilon chain family. In terms of assembly, F-type ATPases have 2 components, CF(1) - the catalytic core - and CF(0) - the membrane proton channel. CF(1) has five subunits: alpha(3), beta(3), gamma(1), delta(1), epsilon(1). CF(0) has three main subunits: a, b and c.

It localises to the cell membrane. Its function is as follows. Produces ATP from ADP in the presence of a proton gradient across the membrane. In Corynebacterium efficiens (strain DSM 44549 / YS-314 / AJ 12310 / JCM 11189 / NBRC 100395), this protein is ATP synthase epsilon chain.